The chain runs to 1483 residues: MSNTPYNSSVPSIASMTQSSVSRSPNMHTATTPGANTSSNSPPLHMSSDSSKIKRKRNRIPLSCTICRKRKVKCDKLRPHCQQCTKTGVAHLCHYMEQTWAEEAEKELLKDNELKKLRERVKSLEKTLSKVHSSPSSNSLKSYNIPESSNLFMGSDEHTTLVNANTGSASSASHMHQQQQQQQQQEQQQDFSRSANANANSSSLSISNKYDNDELDLTKDFDLLHIKSNGTIHLGATHWLSIMKGDPYLKLLWGHIFAMREKLNEWYYQKNSYSKLKSSKCPINHAQAPPSAAAAATRKCPVDHSAFSSGMVAPKEETPLPRKCPVDHTMFSSGMIPPREDTSSQKRCPVDHTMYSAGMMPPKDETPSPFSTKAMIDHNKHTMNPPQSKCPVDHRNYMKDYPSDMANSSSNPASRCPIDHSSMKNTAALPASTHNTIPHHQPQSGSHARSHPAQNRKHDSYMTESEVLATLCEMLPPKRVIALFIEKFFKHLYPAIPILDEQNFKNHMNQMLSLSSMNPTVNNFGMSMPSSSTLENQPITQINLPKLSDSCNLGILIIILRLTWLSIPSNSCEVDLGEESGSFLVPNESSNMSASALTSMAKEESLLLKHETPVEALELCQKYLIKFDELSSISNNNVNLTTVQFAIFYNFYMKSASNDLTTLTNTNNTGMANPGHDSESHQILLSNITQMAFSCGLHRDPDNFPQLNATIPATSQDVSNNGSKKANPSTNPTLNNNMSAATTNSSSRSGSADSRSGSNPVNKKENQVSIERFKHTWRKIWYYIVSMDVNQSLSLGSPRLLRNLRDFSDTKLPSASRIDYVRDIKELIIVKNFTLFFQIDLCIIAVLNHILNVSLARSVRKFELDSLINLLKNLTYGTENVNDVVSSLINKGLLPTSEGGSVDSNNDEIYGLPKLPDILNHGQHNQNLYADGRNTSSSDIDKKLDLPHESTTRALFFSKHMTIRMLLYLLNYILFTHYEPMGSEDPGTNILAKEYAQEALNFAMDGYRNCMIFFNNIRNTNSLFDYMNVILSYPCLDIGHRSLQFIVCLILRAKCGPLTGMRESSIITNGTSSGFNSSVEDEDVKVKQESSDELKKDDFMKDVNLDSGDSLAEILMSRMLLFQKLTKQLSKKYNYAIRMNKSTGFFVSLLDTPSKKSDSKSGGSSFMLGNWKHPKVSNMSGFLAGDKDQLQKCPVYQDALGFVSPTGANEGSAPMQGMSLQGSTARMGGTQLPPIRSYKPITYTSSNLRRMNETGEAEAKRRRFNDGYIDNNSNNDIPRGISPKPSNGLSSVQPLLSSFSMNQLNGGTIPTVPSLTNITSQMGALPSLDRITTNQINLPDPSRDEAFDNSIKQMTPMTSAFMNANTTIPSSTLNGNMNMNGAGTANTDTSANGSALSTLTSPQGSDLASNSATQYKPDLEDFLMQNSNFNGLMINPSSLVEVVGGYNDPNNLGRNDAVDFLPVDNVEIDGLVDFYRADFPIWE.

Positions 1-50 (MSNTPYNSSVPSIASMTQSSVSRSPNMHTATTPGANTSSNSPPLHMSSDS) are enriched in polar residues. Positions 1–56 (MSNTPYNSSVPSIASMTQSSVSRSPNMHTATTPGANTSSNSPPLHMSSDSSKIKRK) are disordered. Residues Cys64, Cys67, Cys74, Cys81, Cys84, and Cys93 each contribute to the Zn(2+) site. A DNA-binding region (zn(2)-C6 fungal-type) is located at residues 64-93 (CTICRKRKVKCDKLRPHCQQCTKTGVAHLC). Residues 105 to 134 (EKELLKDNELKKLRERVKSLEKTLSKVHSS) are a coiled coil. Residues 162–176 (VNANTGSASSASHMH) show a composition bias toward polar residues. The segment at 162 to 208 (VNANTGSASSASHMHQQQQQQQQQEQQQDFSRSANANANSSSLSISN) is disordered. Over residues 177–208 (QQQQQQQQQEQQQDFSRSANANANSSSLSISN) the composition is skewed to low complexity. The interval 244–444 (KGDPYLKLLW…NTIPHHQPQS (201 aa)) is heme-responsive; required for HMC formation. HRM repeat units follow at residues 280-285 (KCPINH), 299-304 (KCPVDH), 323-328 (KCPVDH), 347-352 (RCPVDH), 389-394 (KCPVDH), and 415-420 (RCPIDH). Composition is skewed to polar residues over residues 432 to 447 (STHN…SGSH) and 706 to 734 (QLNA…NPTL). Disordered stretches follow at residues 432–458 (STHN…NRKH) and 706–767 (QLNA…KENQ). The span at 735 to 759 (NNNMSAATTNSSSRSGSADSRSGSN) shows a compositional bias: low complexity. Residues 1192–1197 (KCPVYQ) form an HRM 7 repeat. The segment at 1384–1411 (TANTDTSANGSALSTLTSPQGSDLASNS) is disordered. Over residues 1388–1411 (DTSANGSALSTLTSPQGSDLASNS) the composition is skewed to polar residues.

As to quaternary structure, binds DNA as a homodimer. Interacts with SRO9 and YDJ1. In the absence of heme, binds to at least four cellular proteins, including YDJ1 and SRO9, forming a high-molecular-weight complex (HMC) which results in repression of its activity and dictates its DNA-binding specificity.

It is found in the nucleus. Regulation of oxygen dependent gene expression. It modulates the expression of Iso-1 (CYP1) and Iso-2 (CYP3) cytochrome c. In response to heme, promotes transcription of genes encoding functions required for respiration, controlling oxidative damage and repression of anaerobic genes. Binds to the sequence 5'-CGGNNNTNNCGG-3'. The chain is Heme-responsive zinc finger transcription factor HAP1 (HAP1) from Saccharomyces cerevisiae (strain RM11-1a) (Baker's yeast).